Reading from the N-terminus, the 454-residue chain is Caspase-9 (454 aa).

Positions 1–92 (MDEADRQLLR…GTLASLLQSG (92 aa)) constitute a CARD domain. Threonine 163 carries the phosphothreonine; by MAPK1 modification. Position 191 is a phosphotyrosine; by ABL1 (tyrosine 191). Catalysis depends on residues histidine 275 and cysteine 325. 2 positions are modified to phosphoserine: serine 340 and serine 348. Positions 354-367 (AVPYQEGPRPLDQL) are excised as a propeptide.

The protein belongs to the peptidase C14A family. As to quaternary structure, heterotetramer that consists of two anti-parallel arranged heterodimers, each one formed by a 35 kDa (p35) and a 10 kDa (p10) subunit. Caspase-9 and APAF1 bind to each other via their respective NH2-terminal CED-3 homologous domains in the presence of cytochrome C and ATP. Interacts (inactive form) with EFHD2. Interacts with HAX1. Interacts with BIRC2/c-IAP1, XIAP/BIRC4, BIRC5/survivin, BIRC6/bruce and BIRC7/livin. Interacts with ABL1 (via SH3 domain); the interaction is direct and increased in the response of cells to genotoxic stress and ABL1/c-Abl activation. Interacts with BCL2L10. In terms of processing, cleavages at Asp-353 by granzyme B and at Asp-368 by caspase-3 generate the two active subunits. Caspase-8 and -10 can also be involved in these processing events. Phosphorylated at Thr-163 by MAPK1/ERK2. Phosphorylation at Thr-163 is sufficient to block caspase-9 processing and subsequent caspase-3 activation. Phosphorylation on Tyr-191 by ABL1/c-Abl; occurs in the response of cells to DNA damage. Post-translationally, ubiquitinated by BIRC6; this activity is inhibited by DIABLO/SMAC.

The catalysed reaction is Strict requirement for an Asp residue at position P1 and with a marked preference for His at position P2. It has a preferred cleavage sequence of Leu-Gly-His-Asp-|-Xaa.. Its activity is regulated as follows. Inhibited by BIRC6; following inhibition of BIRC6-caspase binding by DIABLO/SMAC, BIRC6 is subjected to caspase cleavage, leading to an increase in active caspases. In terms of biological role, involved in the activation cascade of caspases responsible for apoptosis execution. Binding of caspase-9 to Apaf-1 leads to activation of the protease which then cleaves and activates effector caspases caspase-3 (CASP3) or caspase-7 (CASP7). Promotes DNA damage-induced apoptosis in a ABL1/c-Abl-dependent manner. Proteolytically cleaves poly(ADP-ribose) polymerase (PARP). Cleaves BIRC6 following inhibition of BIRC6-caspase binding by DIABLO/SMAC. The chain is Caspase-9 (Casp9) from Mus musculus (Mouse).